Consider the following 397-residue polypeptide: Elongation factor Tu (397 aa).

The tr-type G domain occupies 10 to 206; the sequence is KPHVNIGTIG…AVDTSIPQPE (197 aa). The segment at 19–26 is G1; it reads GHIDHGKT. Position 19 to 26 (19 to 26) interacts with GTP; sequence GHIDHGKT. Thr26 is a Mg(2+) binding site. Residues 62–66 form a G2 region; sequence GITIS. Residues 83-86 form a G3 region; that stretch reads DCPG. GTP contacts are provided by residues 83–87 and 138–141; these read DCPGH and NKSD. Residues 138–141 form a G4 region; sequence NKSD. The G5 stretch occupies residues 176 to 178; sequence SAL.

Belongs to the TRAFAC class translation factor GTPase superfamily. Classic translation factor GTPase family. EF-Tu/EF-1A subfamily. As to quaternary structure, monomer.

It is found in the cytoplasm. It catalyses the reaction GTP + H2O = GDP + phosphate + H(+). GTP hydrolase that promotes the GTP-dependent binding of aminoacyl-tRNA to the A-site of ribosomes during protein biosynthesis. In Salinispora tropica (strain ATCC BAA-916 / DSM 44818 / JCM 13857 / NBRC 105044 / CNB-440), this protein is Elongation factor Tu.